Here is a 407-residue protein sequence, read N- to C-terminus: Putative glucose/galactose transporter (407 aa).

The next 12 helical transmembrane spans lie at 11 to 31, 47 to 67, 70 to 90, 96 to 116, 139 to 159, 180 to 200, 225 to 245, 263 to 283, 300 to 320, 321 to 341, 349 to 369, and 378 to 398; these read GSLTALFFLMGFITVLNDILI, LIQFCFFGAYFIMGGVFGNVI, IGYPFGVVLGFVITASGCALF, FGSYGFFLGALFILASGIVCL, VQAFNSLGTTLGPIFGSLLIF, VQMPYLGLAVFSLLLALVMYL, FVFGALGIFFYVGGEVAIGSF, HYLVYYWGGAMVGRFLGSALM, IILIALAILIGGKIALFALTF, VGFFNSIMFPTIFSLATLNLG, GVISMAIVGGALIPPIQGVVT, and NLLYAYSVPLLCYFYILFFAL.

It belongs to the major facilitator superfamily. FHS transporter (TC 2.A.1.7) family.

The protein resides in the cell inner membrane. Its function is as follows. Intake of glucose and galactose. The protein is Putative glucose/galactose transporter (gluP) of Helicobacter pylori (strain J99 / ATCC 700824) (Campylobacter pylori J99).